Reading from the N-terminus, the 728-residue chain is Cytosolic endo-beta-N-acetylglucosaminidase (728 aa).

Positions 287–381 (QNRVFFDACD…NFLLNEDKFW (95 aa)) constitute a BRCT domain.

Belongs to the glycosyl hydrolase 85 family.

The protein localises to the cytoplasm. It is found in the cytosol. The enzyme catalyses an N(4)-(oligosaccharide-(1-&gt;3)-[oligosaccharide-(1-&gt;6)]-beta-D-Man-(1-&gt;4)-beta-D-GlcNAc-(1-&gt;4)-alpha-D-GlcNAc)-L-asparaginyl-[protein] + H2O = an oligosaccharide-(1-&gt;3)-[oligosaccharide-(1-&gt;6)]-beta-D-Man-(1-&gt;4)-D-GlcNAc + N(4)-(N-acetyl-beta-D-glucosaminyl)-L-asparaginyl-[protein]. Its function is as follows. Endoglycosidase that releases N-glycans from glycoproteins by cleaving the beta-1,4-glycosidic bond in the N,N'-diacetylchitobiose core. Involved in the processing of free oligosaccharides in the cytosol. The sequence is that of Cytosolic endo-beta-N-acetylglucosaminidase (ENGASE) from Gallus gallus (Chicken).